A 57-amino-acid chain; its full sequence is uncharacterized protein (57 aa).

This is an uncharacterized protein from His1 virus (isolate Australia/Victoria) (His1V).